A 354-amino-acid chain; its full sequence is Uroporphyrinogen decarboxylase (354 aa).

Substrate is bound by residues 27 to 31 (RQAGR), Asp77, Tyr153, Thr208, and His326.

Belongs to the uroporphyrinogen decarboxylase family. In terms of assembly, homodimer.

It localises to the cytoplasm. It catalyses the reaction uroporphyrinogen III + 4 H(+) = coproporphyrinogen III + 4 CO2. It functions in the pathway porphyrin-containing compound metabolism; protoporphyrin-IX biosynthesis; coproporphyrinogen-III from 5-aminolevulinate: step 4/4. Catalyzes the decarboxylation of four acetate groups of uroporphyrinogen-III to yield coproporphyrinogen-III. This is Uroporphyrinogen decarboxylase from Neisseria gonorrhoeae (strain ATCC 700825 / FA 1090).